The sequence spans 228 residues: Phosphatidylserine decarboxylase proenzyme (228 aa).

The active-site Schiff-base intermediate with substrate; via pyruvic acid is S197. S197 bears the Pyruvic acid (Ser); by autocatalysis mark.

Belongs to the phosphatidylserine decarboxylase family. PSD-A subfamily. In terms of assembly, heterodimer of a large membrane-associated beta subunit and a small pyruvoyl-containing alpha subunit. Pyruvate serves as cofactor. Is synthesized initially as an inactive proenzyme. Formation of the active enzyme involves a self-maturation process in which the active site pyruvoyl group is generated from an internal serine residue via an autocatalytic post-translational modification. Two non-identical subunits are generated from the proenzyme in this reaction, and the pyruvate is formed at the N-terminus of the alpha chain, which is derived from the carboxyl end of the proenzyme. The post-translation cleavage follows an unusual pathway, termed non-hydrolytic serinolysis, in which the side chain hydroxyl group of the serine supplies its oxygen atom to form the C-terminus of the beta chain, while the remainder of the serine residue undergoes an oxidative deamination to produce ammonia and the pyruvoyl prosthetic group on the alpha chain.

It localises to the cell membrane. The catalysed reaction is a 1,2-diacyl-sn-glycero-3-phospho-L-serine + H(+) = a 1,2-diacyl-sn-glycero-3-phosphoethanolamine + CO2. It participates in phospholipid metabolism; phosphatidylethanolamine biosynthesis; phosphatidylethanolamine from CDP-diacylglycerol: step 2/2. Its function is as follows. Catalyzes the formation of phosphatidylethanolamine (PtdEtn) from phosphatidylserine (PtdSer). This Bacteroides fragilis (strain ATCC 25285 / DSM 2151 / CCUG 4856 / JCM 11019 / LMG 10263 / NCTC 9343 / Onslow / VPI 2553 / EN-2) protein is Phosphatidylserine decarboxylase proenzyme.